The chain runs to 394 residues: Alpha-2B adrenergic receptor (394 aa).

The helical transmembrane segment at 1 to 25 threads the bilayer; it reads AIAAVITFLILFTIFGNALVILAVL. Residues 26–36 are Cytoplasmic-facing; that stretch reads TSRSLRAPQNL. The helical transmembrane segment at 37 to 62 threads the bilayer; that stretch reads FLVSLAAADILVATLIIPFSLANELL. Residues 63 to 72 are Extracellular-facing; it reads GYWYFRRTWC. The cysteines at positions 72 and 151 are disulfide-linked. Residues 73 to 95 form a helical membrane-spanning segment; it reads EVYLALDVLFCTSSIVHLCAISL. Over 96-117 the chain is Cytoplasmic; the sequence is DRYWAVSRALEYNCKRTPRRIK. A helical membrane pass occupies residues 118–140; it reads CIILTVWLIAAAISLPPLIYKGD. Over 141-156 the chain is Extracellular; that stretch reads QGPQPHGAPQCKLNQE. The helical transmembrane segment at 157–180 threads the bilayer; the sequence is AWYILSSSLGSFFVPCLIMILVYL. Residues 181–358 lie on the Cytoplasmic side of the membrane; that stretch reads RIYLIAKRSH…LSREKRFTFV (178 aa). The segment at 191–318 is disordered; the sequence is RRGPRAKGGP…GSPPLQQPQG (128 aa). Positions 281–298 are enriched in acidic residues; sequence LEEEAEEEEEEEEEEDEP. The segment covering 299 to 312 has biased composition (low complexity); that stretch reads QAVPVSPASVGSPP. Residues 359–382 traverse the membrane as a helical segment; sequence LAVVIGVFVLCWFPFFFSYSLSAI. Residues 383–391 are Extracellular-facing; sequence CPQQCRVPH. Residues 392 to 394 form a helical membrane-spanning segment; the sequence is GLF.

It belongs to the G-protein coupled receptor 1 family. Adrenergic receptor subfamily. ADRA2B sub-subfamily. As to quaternary structure, interacts with RAB26. Interacts with PPP1R9B. Interacts with GGA1, GGA2 and GGA3.

The protein localises to the cell membrane. Its function is as follows. Alpha-2 adrenergic receptors mediate the catecholamine-induced inhibition of adenylate cyclase through the action of G proteins. In Oryctolagus cuniculus (Rabbit), this protein is Alpha-2B adrenergic receptor (ADRA2B).